The following is a 120-amino-acid chain: Large ribosomal subunit protein uL18 (120 aa).

It belongs to the universal ribosomal protein uL18 family. As to quaternary structure, part of the 50S ribosomal subunit; part of the 5S rRNA/L5/L18/L25 subcomplex. Contacts the 5S and 23S rRNAs.

Its function is as follows. This is one of the proteins that bind and probably mediate the attachment of the 5S RNA into the large ribosomal subunit, where it forms part of the central protuberance. The chain is Large ribosomal subunit protein uL18 from Methylocella silvestris (strain DSM 15510 / CIP 108128 / LMG 27833 / NCIMB 13906 / BL2).